Reading from the N-terminus, the 221-residue chain is Toll/interleukin-1 receptor domain-containing adapter protein (221 aa).

The tract at residues 1–82 is disordered; the sequence is MASSTSLPAP…HASDSGSSRW (82 aa). The segment covering 48–67 has biased composition (low complexity); it reads SQPTSQDSPLPPSLSSVTSP. Positions 84–213 constitute a TIR domain; sequence KDYDVCVCHS…GGFRQVKEAV (130 aa). 2 cysteine pairs are disulfide-bonded: C89–C134 and C142–C174.

In terms of assembly, homodimer. Also forms heterodimers with MYD88. May interact with PIK3AP1. Interacts with TLR4 and IRAK2 via their respective TIR domains. Interacts with BMX and TBK1. Interacts with EIF2AK2. Does not interact with IRAK1, nor TLR9. Interacts with TLR2. Interacts with RAGE/AGER. As to quaternary structure, (Microbial infection) In case of infection, interacts with B.melitensis protein TcpB (AC Q8YF53); TcpB abolishes the TLR4-TIRAP interaction and downstream signaling. Post-translationally, phosphorylated by IRAK1 and IRAK4. Also phosphorylated by BTK. Polyubiquitinated. Polyubiquitination follows phosphorylation by BTK and leads to TIRAP degradation. In terms of tissue distribution, highly expressed in liver, kidney, spleen, skeletal muscle and heart. Also detected in peripheral blood leukocytes, lung, placenta, small intestine, thymus, colon and brain.

The protein localises to the cytoplasm. It is found in the cell membrane. The protein resides in the membrane. Its function is as follows. Adapter involved in TLR2, TLR4 and RAGE signaling pathways in the innate immune response. Acts via IRAK2 and TRAF-6, leading to the activation of NF-kappa-B, MAPK1, MAPK3 and JNK, and resulting in cytokine secretion and the inflammatory response. Positively regulates the production of TNF-alpha (TNF) and interleukin-6 (IL6). The polypeptide is Toll/interleukin-1 receptor domain-containing adapter protein (TIRAP) (Homo sapiens (Human)).